Consider the following 419-residue polypeptide: UDP-N-acetylglucosamine 1-carboxyvinyltransferase (419 aa).

22–23 lines the phosphoenolpyruvate pocket; the sequence is KN. Arg93 is a UDP-N-acetyl-alpha-D-glucosamine binding site. The active-site Proton donor is the Cys117. Cys117 bears the 2-(S-cysteinyl)pyruvic acid O-phosphothioketal mark. UDP-N-acetyl-alpha-D-glucosamine is bound by residues 122 to 126, Asp305, and Ile327; that span reads RPVDQ.

Belongs to the EPSP synthase family. MurA subfamily.

Its subcellular location is the cytoplasm. The catalysed reaction is phosphoenolpyruvate + UDP-N-acetyl-alpha-D-glucosamine = UDP-N-acetyl-3-O-(1-carboxyvinyl)-alpha-D-glucosamine + phosphate. It functions in the pathway cell wall biogenesis; peptidoglycan biosynthesis. Functionally, cell wall formation. Adds enolpyruvyl to UDP-N-acetylglucosamine. The polypeptide is UDP-N-acetylglucosamine 1-carboxyvinyltransferase (Dichelobacter nodosus (strain VCS1703A)).